The following is a 394-amino-acid chain: Large ribosomal subunit protein bL27m (394 aa).

The N-terminal 34 residues, Met1–Thr34, are a transit peptide targeting the mitochondrion. 2 disordered regions span residues Thr36 to Lys57 and Ala145 to Ser181. Over residues Ala145–Gln170 the composition is skewed to basic and acidic residues.

This sequence belongs to the bacterial ribosomal protein bL27 family.

It is found in the mitochondrion. Its function is as follows. Component of the large subunit of mitochondrial ribosome. In Debaryomyces hansenii (strain ATCC 36239 / CBS 767 / BCRC 21394 / JCM 1990 / NBRC 0083 / IGC 2968) (Yeast), this protein is Large ribosomal subunit protein bL27m (MRPL2).